Consider the following 293-residue polypeptide: 4-hydroxy-tetrahydrodipicolinate synthase (293 aa).

Thr-45 provides a ligand contact to pyruvate. Tyr-133 (proton donor/acceptor) is an active-site residue. Residue Lys-161 is the Schiff-base intermediate with substrate of the active site. Residue Ile-203 coordinates pyruvate.

It belongs to the DapA family. Homotetramer; dimer of dimers.

It localises to the cytoplasm. It carries out the reaction L-aspartate 4-semialdehyde + pyruvate = (2S,4S)-4-hydroxy-2,3,4,5-tetrahydrodipicolinate + H2O + H(+). The protein operates within amino-acid biosynthesis; L-lysine biosynthesis via DAP pathway; (S)-tetrahydrodipicolinate from L-aspartate: step 3/4. Functionally, catalyzes the condensation of (S)-aspartate-beta-semialdehyde [(S)-ASA] and pyruvate to 4-hydroxy-tetrahydrodipicolinate (HTPA). The chain is 4-hydroxy-tetrahydrodipicolinate synthase from Pseudoalteromonas atlantica (strain T6c / ATCC BAA-1087).